The following is a 333-amino-acid chain: MASVMQKLITPLCSGPQRPRNKVTVVGVGQVGMACAVSILMRELADELALVDVIEDKLKGEMMDLQHGSLFLKTSKIVADKDYSVSANSRIVVVTAGVRHREGESRLNLVQRNVNIFKHIIPQIVKYSPDCILVVVSNPVDVLTYVTWKLSGLPKHRVIGSGTNLDSARFRYLMAEKLGIHSSSFNGWILGEHGDSSVPVWSGANVAGVNLQKLNPDIGTDADKENWKDAHKMVVESAYEVIRLKGYTNWAIGLSVADLAETLIKNLNRIHPVSTMVKGMYGIGDEVYLSLPCVLNNGGVNSVVNMTLTDEEIAQLKKSADTLWGIQKDLKDL.

Residues 29–57 (GQVG…IEDK) and arginine 99 each bind NAD(+). 3 residues coordinate substrate: arginine 106, asparagine 138, and arginine 169. Asparagine 138 provides a ligand contact to NAD(+). The Proton acceptor role is filled by histidine 193. Residue threonine 248 coordinates substrate.

Belongs to the LDH/MDH superfamily. LDH family. As to quaternary structure, homotetramer.

The protein localises to the cytoplasm. The enzyme catalyses (S)-lactate + NAD(+) = pyruvate + NADH + H(+). It functions in the pathway fermentation; pyruvate fermentation to lactate; (S)-lactate from pyruvate: step 1/1. In terms of biological role, interconverts simultaneously and stereospecifically pyruvate and lactate with concomitant interconversion of NADH and NAD(+). This is L-lactate dehydrogenase B chain (ldhb) from Anguilla rostrata (American eel).